The sequence spans 190 residues: Threonylcarbamoyl-AMP synthase (190 aa).

Residues 7–190 (ADAISFIVDV…ALTGELFRQG (184 aa)) form the YrdC-like domain.

It belongs to the SUA5 family. TsaC subfamily.

It is found in the cytoplasm. It carries out the reaction L-threonine + hydrogencarbonate + ATP = L-threonylcarbamoyladenylate + diphosphate + H2O. Functionally, required for the formation of a threonylcarbamoyl group on adenosine at position 37 (t(6)A37) in tRNAs that read codons beginning with adenine. Catalyzes the conversion of L-threonine, HCO(3)(-)/CO(2) and ATP to give threonylcarbamoyl-AMP (TC-AMP) as the acyladenylate intermediate, with the release of diphosphate. This chain is Threonylcarbamoyl-AMP synthase, found in Cronobacter sakazakii (strain ATCC BAA-894) (Enterobacter sakazakii).